Here is a 485-residue protein sequence, read N- to C-terminus: Hydrogenase transcriptional regulatory protein HoxA (485 aa).

The 115-residue stretch at Thr-6–Val-120 folds into the Response regulatory domain. Asp-54 is subject to 4-aspartylphosphate. The 227-residue stretch at Ser-166–Ala-392 folds into the Sigma-54 factor interaction domain. Residues Gly-192–Glu-199 and Glu-264–Gln-273 each bind ATP. The interval Pro-404–Ser-426 is disordered. Positions Asn-451–Leu-470 form a DNA-binding region, H-T-H motif.

The protein localises to the cytoplasm. Its function is as follows. Probable member of the two-component regulatory system involved in the regulation of the hydrogenase activity. HoxA is probably phosphorylated by a sensory component (which could be HoxX) and then acts in conjunction with sigma-54 as a transcriptional activator. The chain is Hydrogenase transcriptional regulatory protein HoxA (hoxA) from Bradyrhizobium diazoefficiens (strain JCM 10833 / BCRC 13528 / IAM 13628 / NBRC 14792 / USDA 110).